Consider the following 944-residue polypeptide: Neutral alpha-glucosidase AB (944 aa).

Residues 1–32 form the signal peptide; the sequence is MAAIAAVAARRRRSWLSLVLAYLGVCLGITLA. A disulfide bond links Cys41 and Cys47. At Ser52 the chain carries Phosphoserine. Asn97 is a glycosylation site (N-linked (GlcNAc...) asparagine). A disordered region spans residues 180–238; the sequence is HQRAPRVPQESKDPAEGNGAQPEATPGDGDKPEETQEKAEKDEPGAWEETFKTHSDSKP. Residues 207-236 are compositionally biased toward basic and acidic residues; sequence DGDKPEETQEKAEKDEPGAWEETFKTHSDS. Positions 283 and 429 each coordinate substrate. Residue Asp542 is the Nucleophile of the active site. Arg602 is a substrate binding site. Asp618 functions as the Proton donor in the catalytic mechanism. Cys633 and Cys644 are oxidised to a cystine. Residue His676 participates in substrate binding.

It belongs to the glycosyl hydrolase 31 family. In terms of assembly, heterodimer of a catalytic alpha subunit (GANAB) and a beta subunit (PRKCSH). Binds glycosylated PTPRC.

The protein localises to the endoplasmic reticulum. The protein resides in the golgi apparatus. Its subcellular location is the melanosome. The catalysed reaction is N(4)-(alpha-D-Glc-(1-&gt;3)-alpha-D-Man-(1-&gt;2)-alpha-D-Man-(1-&gt;2)-alpha-D-Man-(1-&gt;3)-[alpha-D-Man-(1-&gt;2)-alpha-D-Man-(1-&gt;3)-[alpha-D-Man-(1-&gt;2)-alpha-D-Man-(1-&gt;6)]-alpha-D-Man-(1-&gt;6)]-beta-D-Man-(1-&gt;4)-beta-D-GlcNAc-(1-&gt;4)-beta-D-GlcNAc)-L-asparaginyl-[protein] + H2O = N(4)-(alpha-D-Man-(1-&gt;2)-alpha-D-Man-(1-&gt;2)-alpha-D-Man-(1-&gt;3)-[alpha-D-Man-(1-&gt;2)-alpha-D-Man-(1-&gt;3)-[alpha-D-Man-(1-&gt;2)-alpha-D-Man-(1-&gt;6)]-alpha-D-Man-(1-&gt;6)]-beta-D-Man-(1-&gt;4)-beta-D-GlcNAc-(1-&gt;4)-beta-D-GlcNAc)-L-asparaginyl-[protein] (N-glucan mannose isomer 9A1,2,3B1,2,3) + beta-D-glucose. It catalyses the reaction N(4)-(alpha-D-Glc-(1-&gt;3)-alpha-D-Glc-(1-&gt;3)-alpha-D-Man-(1-&gt;2)-alpha-D-Man-(1-&gt;2)-alpha-D-Man-(1-&gt;3)-[alpha-D-Man-(1-&gt;2)-alpha-D-Man-(1-&gt;3)-[alpha-D-Man-(1-&gt;2)-alpha-D-Man-(1-&gt;6)]-alpha-D-Man-(1-&gt;6)]-beta-D-Man-(1-&gt;4)-beta-D-GlcNAc-(1-&gt;4)-beta-D-GlcNAc)-L-asparaginyl-[protein] + H2O = N(4)-(alpha-D-Glc-(1-&gt;3)-alpha-D-Man-(1-&gt;2)-alpha-D-Man-(1-&gt;2)-alpha-D-Man-(1-&gt;3)-[alpha-D-Man-(1-&gt;2)-alpha-D-Man-(1-&gt;3)-[alpha-D-Man-(1-&gt;2)-alpha-D-Man-(1-&gt;6)]-alpha-D-Man-(1-&gt;6)]-beta-D-Man-(1-&gt;4)-beta-D-GlcNAc-(1-&gt;4)-beta-D-GlcNAc)-L-asparaginyl-[protein] + beta-D-glucose. It participates in glycan metabolism; N-glycan metabolism. Catalytic subunit of glucosidase II that cleaves sequentially the 2 innermost alpha-1,3-linked glucose residues from the Glc(2)Man(9)GlcNAc(2) oligosaccharide precursor of immature glycoproteins. Required for PKD1/Polycystin-1 and PKD2/Polycystin-2 maturation and localization to the cell surface and cilia. The polypeptide is Neutral alpha-glucosidase AB (Mus musculus (Mouse)).